Reading from the N-terminus, the 158-residue chain is Small ribosomal subunit protein uS9 (158 aa).

It belongs to the universal ribosomal protein uS9 family.

The protein is Small ribosomal subunit protein uS9 of Brucella abortus (strain S19).